We begin with the raw amino-acid sequence, 118 residues long: Holo-[acyl-carrier-protein] synthase (118 aa).

D8 and E58 together coordinate Mg(2+).

This sequence belongs to the P-Pant transferase superfamily. AcpS family. The cofactor is Mg(2+).

The protein localises to the cytoplasm. It carries out the reaction apo-[ACP] + CoA = holo-[ACP] + adenosine 3',5'-bisphosphate + H(+). In terms of biological role, transfers the 4'-phosphopantetheine moiety from coenzyme A to a Ser of acyl-carrier-protein. The chain is Holo-[acyl-carrier-protein] synthase from Listeria monocytogenes serotype 4b (strain CLIP80459).